A 315-amino-acid chain; its full sequence is Probable cell division protein kinase ECU11_1290 (315 aa).

A Protein kinase domain is found at 13 to 294 (YEKVCRISSG…ASQGLCSGFV (282 aa)). ATP-binding positions include 19-27 (ISSGSFGNV) and K42. D138 (proton acceptor) is an active-site residue.

The protein belongs to the protein kinase superfamily. CMGC Ser/Thr protein kinase family. CDC2/CDKX subfamily.

It localises to the nucleus. It carries out the reaction L-seryl-[protein] + ATP = O-phospho-L-seryl-[protein] + ADP + H(+). The catalysed reaction is L-threonyl-[protein] + ATP = O-phospho-L-threonyl-[protein] + ADP + H(+). May play a role in the control of the eukaryotic cell cycle. In Encephalitozoon cuniculi (strain GB-M1) (Microsporidian parasite), this protein is Probable cell division protein kinase ECU11_1290.